The following is a 410-amino-acid chain: Elongation factor Tu, chloroplastic (410 aa).

Positions 10-215 (KPHVNIGTIG…AVDQYIPTPK (206 aa)) constitute a tr-type G domain. Positions 19-26 (GHVDHGKT) are G1. Position 19 to 26 (19 to 26 (GHVDHGKT)) interacts with GTP. Thr-26 contributes to the Mg(2+) binding site. Residues 61–65 (GITIN) form a G2 region. The interval 82-85 (DCPG) is G3. GTP-binding positions include 82–86 (DCPGH) and 137–140 (NKQD). Positions 137–140 (NKQD) are G4. Residues 175–177 (SAL) form a G5 region.

The protein belongs to the TRAFAC class translation factor GTPase superfamily. Classic translation factor GTPase family. EF-Tu/EF-1A subfamily.

The protein resides in the plastid. It is found in the chloroplast. The catalysed reaction is GTP + H2O = GDP + phosphate + H(+). In terms of biological role, GTP hydrolase that promotes the GTP-dependent binding of aminoacyl-tRNA to the A-site of ribosomes during protein biosynthesis. The chain is Elongation factor Tu, chloroplastic (tufA) from Nephroselmis olivacea (Green alga).